Consider the following 219-residue polypeptide: Glutamine transport system permease protein GlnP (219 aa).

Residues 1 to 22 (MQFDWSAIWPAIPLLIEGAKMT) lie on the Periplasmic side of the membrane. The region spanning 19 to 209 (AKMTLWISVL…IITLVLSFIL (191 aa)) is the ABC transmembrane type-1 domain. Residues 23 to 43 (LWISVLGLAGGLVIGLLAGFA) form a helical membrane-spanning segment. The Cytoplasmic portion of the chain corresponds to 44–53 (RTFGGWIANH). Residues 54 to 74 (VALVFIEVIRGTPIVVQVMFI) traverse the membrane as a helical segment. Topologically, residues 75 to 88 (YFALPMAFNDLRID) are periplasmic. A helical membrane pass occupies residues 89–109 (PFTAAVVTIMINSGAYIAEIT). Over 110–150 (RGAVLSIHKGFREAGLALGLSRWETIRYVILPLALRRMLPP) the chain is Cytoplasmic. Residues 151 to 171 (LGNQWIISIKDTSLFIVIGVA) form a helical membrane-spanning segment. At 172 to 187 (ELTRQGQEIIAGNFRA) the chain is on the periplasmic side. A helical membrane pass occupies residues 188 to 208 (LEIWSAVAVFYLIITLVLSFI). Topologically, residues 209-219 (LRRLERRMKIL) are cytoplasmic.

This sequence belongs to the binding-protein-dependent transport system permease family. HisMQ subfamily.

It localises to the cell inner membrane. Its function is as follows. Part of the binding-protein-dependent transport system for glutamine; probably responsible for the translocation of the substrate across the membrane. The polypeptide is Glutamine transport system permease protein GlnP (glnP) (Escherichia coli O6:H1 (strain CFT073 / ATCC 700928 / UPEC)).